The sequence spans 200 residues: MTVKYVESSKLPTPMGMFAMHGFSDDSSDKEHVVLTMGDVSSEEPVLVRIHSECLTGDALFSLRCDCGAQLQAAMHKIAIEGRGAIFYLRQEGRGIGLLNKIRAYKLQDCGADTVEANERLGFGADMRDYSILKPMFEHLGIAQVKLMTNNPRKIDALTQYGINIVNRIPHETGRNPHNADYLETKKGKLGHMFGEKDGE.

GTP is bound at residue 49-53 (RIHSE). Positions 54, 65, and 67 each coordinate Zn(2+). Residues Gln70, 92 to 94 (EGR), and Thr114 each bind GTP. Asp126 functions as the Proton acceptor in the catalytic mechanism. The active-site Nucleophile is Arg128. GTP is bound by residues Thr149 and Lys154.

Belongs to the GTP cyclohydrolase II family. Zn(2+) serves as cofactor.

The enzyme catalyses GTP + 4 H2O = 2,5-diamino-6-hydroxy-4-(5-phosphoribosylamino)-pyrimidine + formate + 2 phosphate + 3 H(+). It functions in the pathway cofactor biosynthesis; riboflavin biosynthesis; 5-amino-6-(D-ribitylamino)uracil from GTP: step 1/4. Its function is as follows. Catalyzes the conversion of GTP to 2,5-diamino-6-ribosylamino-4(3H)-pyrimidinone 5'-phosphate (DARP), formate and pyrophosphate. This chain is GTP cyclohydrolase-2, found in Saccharophagus degradans (strain 2-40 / ATCC 43961 / DSM 17024).